A 432-amino-acid chain; its full sequence is N-acylneuraminate cytidylyltransferase (432 aa).

Met1 bears the N-acetylmethionine mark. Positions 1–38 (MDALEKGAVTSGPAPRGRPSRGRPPKLQRSRGAGRGLE) are disordered. Positions 15–31 (PRGRPSRGRPPKLQRSR) match the BC1 motif motif. Over residues 18 to 29 (RPSRGRPPKLQR) the composition is skewed to basic residues. Omega-N-methylarginine is present on residues Arg35 and Arg50. Residues Arg50, Asn60, Arg109, Ser118, Ser120, and Gln141 each contribute to the substrate site. The BC2 motif motif lies at 198 to 204 (KRPRRQD). Residue Arg199 is part of the active site. The short motif at 267–274 (KEKLKEIK) is the BC3 motif element.

This sequence belongs to the CMP-NeuNAc synthase family. Homotetramer; the active enzyme is formed by a dimer of dimers. As to expression, highly expressed in brain and heart, and at intermediate level muscle and liver.

Its subcellular location is the nucleus. The enzyme catalyses an N-acylneuraminate + CTP = a CMP-N-acyl-beta-neuraminate + diphosphate. Its pathway is amino-sugar metabolism; N-acetylneuraminate metabolism. In terms of biological role, catalyzes the activation of N-acetylneuraminic acid (NeuNAc) to cytidine 5'-monophosphate N-acetylneuraminic acid (CMP-NeuNAc), a substrate required for the addition of sialic acid. Has some activity toward NeuNAc, N-glycolylneuraminic acid (Neu5Gc) or 2-keto-3-deoxy-D-glycero-D-galacto-nononic acid (KDN). This chain is N-acylneuraminate cytidylyltransferase (Cmas), found in Mus musculus (Mouse).